The primary structure comprises 292 residues: Undecaprenyl-diphosphatase (292 aa).

A run of 5 helical transmembrane segments spans residues 87 to 107 (MGWY…LFEE), 113 to 133 (FRDL…LGMV), 190 to 210 (AFLL…KDIG), 219 to 239 (ATIV…AWFM), and 250 to 270 (FVYY…FGVL).

Belongs to the UppP family.

It is found in the cell membrane. It catalyses the reaction di-trans,octa-cis-undecaprenyl diphosphate + H2O = di-trans,octa-cis-undecaprenyl phosphate + phosphate + H(+). Catalyzes the dephosphorylation of undecaprenyl diphosphate (UPP). Confers resistance to bacitracin. This Thermobifida fusca (strain YX) protein is Undecaprenyl-diphosphatase.